The sequence spans 31 residues: Cytochrome b6-f complex subunit 6 (31 aa).

Residues 4-24 (ITSYFGFLLAALTITSALFIG) form a helical membrane-spanning segment.

It belongs to the PetL family. As to quaternary structure, the 4 large subunits of the cytochrome b6-f complex are cytochrome b6, subunit IV (17 kDa polypeptide, PetD), cytochrome f and the Rieske protein, while the 4 small subunits are PetG, PetL, PetM and PetN. The complex functions as a dimer.

It is found in the plastid. It localises to the chloroplast thylakoid membrane. Functionally, component of the cytochrome b6-f complex, which mediates electron transfer between photosystem II (PSII) and photosystem I (PSI), cyclic electron flow around PSI, and state transitions. PetL is important for photoautotrophic growth as well as for electron transfer efficiency and stability of the cytochrome b6-f complex. The sequence is that of Cytochrome b6-f complex subunit 6 from Hamamelis virginiana (Witch-hazel).